We begin with the raw amino-acid sequence, 194 residues long: Probable GTP-binding protein EngB (194 aa).

The 173-residue stretch at 22 to 194 folds into the EngB-type G domain; that stretch reads DLPEYALAGR…AWQFIKEGME (173 aa). Residues 30–37, 57–61, 75–78, 142–145, and 174–176 each bind GTP; these read GRSNVGKS, GKTQT, DVPG, TKAD, and FSS. The Mg(2+) site is built by serine 37 and threonine 59.

This sequence belongs to the TRAFAC class TrmE-Era-EngA-EngB-Septin-like GTPase superfamily. EngB GTPase family. Requires Mg(2+) as cofactor.

Functionally, necessary for normal cell division and for the maintenance of normal septation. The protein is Probable GTP-binding protein EngB of Listeria innocua serovar 6a (strain ATCC BAA-680 / CLIP 11262).